Consider the following 923-residue polypeptide: DNA mismatch repair protein MutS (923 aa).

671 to 678 (GPNMAGKS) serves as a coordination point for ATP.

This sequence belongs to the DNA mismatch repair MutS family.

Functionally, this protein is involved in the repair of mismatches in DNA. It is possible that it carries out the mismatch recognition step. This protein has a weak ATPase activity. The sequence is that of DNA mismatch repair protein MutS from Rhodopseudomonas palustris (strain BisB5).